We begin with the raw amino-acid sequence, 579 residues long: Protein downstream neighbor of son homolog (579 aa).

2 disordered regions span residues 1–68 (MAEL…RRNP) and 331–379 (FSQP…DESF). Residues 339-348 (DTGKKQKKPE) show a composition bias toward basic and acidic residues. Residues 365-378 (EADEASDESDEDES) are compositionally biased toward acidic residues.

Belongs to the DONSON family. Component of the replisome complex.

The protein resides in the nucleus. Replisome component that maintains genome stability by protecting stalled or damaged replication forks. After the induction of replication stress, required for the stabilization of stalled replication forks, the efficient activation of the intra-S-phase and G/2M cell-cycle checkpoints and the maintenance of genome stability. In Xenopus laevis (African clawed frog), this protein is Protein downstream neighbor of son homolog.